Consider the following 211-residue polypeptide: High mobility group protein B1-like 1 (211 aa).

N6-acetyllysine is present on residues Lys-3, Lys-7, Lys-8, Lys-12, Lys-28, Lys-29, and Lys-30. Positions 9–79 (PRGKMSSYAF…HYERQMKTYI (71 aa)) form a DNA-binding region, HMG box 1. Residues 71–96 (YERQMKTYIPPKGETKKKFKDPNAPK) form a disordered region. Over residues 83-94 (GETKKKFKDPNA) the composition is skewed to basic and acidic residues. Residues 95–163 (PKRPPSAFFL…KYEKDIAAYQ (69 aa)) constitute a DNA-binding region (HMG box 2). N6-acetyllysine occurs at positions 127, 128, 172, 173, 177, 180, 182, 183, 184, and 185. The interval 161–211 (AYQAKGKPEAAKKGVVKAEKSKKKKEEEEDEEDEEDEEEEDEEDEEDDDDE) is disordered. Positions 166 to 179 (GKPEAAKKGVVKAE) are enriched in basic and acidic residues. The segment covering 187–211 (EEEDEEDEEDEEEEDEEDEEDDDDE) has biased composition (acidic residues).

The protein belongs to the HMGB family.

The protein resides in the nucleus. Its subcellular location is the chromosome. Binds preferentially single-stranded DNA and unwinds double-stranded DNA. This chain is High mobility group protein B1-like 1 (HMGB1P1), found in Homo sapiens (Human).